A 174-amino-acid chain; its full sequence is 3-hydroxyanthranilate 3,4-dioxygenase (174 aa).

Arg47 provides a ligand contact to O2. Residues His51, Glu57, and His95 each contribute to the Fe cation site. Residue Glu57 coordinates substrate. Positions 99 and 110 each coordinate substrate. Positions 125, 128, 162, and 165 each coordinate Fe cation.

Belongs to the 3-HAO family. In terms of assembly, homodimer. It depends on Fe(2+) as a cofactor.

It catalyses the reaction 3-hydroxyanthranilate + O2 = (2Z,4Z)-2-amino-3-carboxymuconate 6-semialdehyde. It participates in cofactor biosynthesis; NAD(+) biosynthesis; quinolinate from L-kynurenine: step 3/3. Catalyzes the oxidative ring opening of 3-hydroxyanthranilate to 2-amino-3-carboxymuconate semialdehyde, which spontaneously cyclizes to quinolinate. The protein is 3-hydroxyanthranilate 3,4-dioxygenase of Burkholderia lata (strain ATCC 17760 / DSM 23089 / LMG 22485 / NCIMB 9086 / R18194 / 383).